Consider the following 61-residue polypeptide: Potassium channel toxin alpha-KTx 18.1 (61 aa).

The N-terminal stretch at 1 to 24 (MRFTGIILILISMTLIDSFFEMKV) is a signal peptide. 3 disulfide bridges follow: cysteine 33–cysteine 52, cysteine 38–cysteine 57, and cysteine 42–cysteine 59.

As to expression, expressed by the venom gland.

It localises to the secreted. Functionally, reversible blocker of both Kv1.3/KCNA3 potassium channels (high affinity) and Shaker B (mammalian Kv1.1 analog) potassium channels (very low affinity). The sequence is that of Potassium channel toxin alpha-KTx 18.1 from Tityus obscurus (Amazonian scorpion).